The primary structure comprises 650 residues: Serine/threonine-protein kinase oca2 (650 aa).

Polar residues predominate over residues 1 to 14 (MSVTPPNVQFNLNG). 2 disordered regions span residues 1–210 (MSVT…PHDI) and 222–288 (HHGK…KSSA). S72 bears the Phosphoserine mark. The span at 78–98 (NHIDPKLAEDRYRSSAARHFE) shows a compositional bias: basic and acidic residues. Over residues 140–154 (PSGSTGYTSPALSQN) the composition is skewed to polar residues. Basic residues-rich tracts occupy residues 222–231 (HHGKHGHHGH) and 245–257 (HDKH…HEKH). Positions 258–279 (HSSLDLRRFFKSHQKTDKEKKP) are enriched in basic and acidic residues. S286 bears the Phosphoserine mark. The 313-residue stretch at 302–614 (GKFGRMLGSG…IHRVFADNWI (313 aa)) folds into the Protein kinase domain. Residues 308 to 316 (LGSGAGGSV) and K331 contribute to the ATP site. D425 serves as the catalytic Proton acceptor. A disordered region spans residues 549–570 (PIRKTDESHSPNSKTDNSSTHK).

The protein belongs to the protein kinase superfamily. Ser/Thr protein kinase family.

The protein localises to the cytoplasm. The enzyme catalyses L-seryl-[protein] + ATP = O-phospho-L-seryl-[protein] + ADP + H(+). It carries out the reaction L-threonyl-[protein] + ATP = O-phospho-L-threonyl-[protein] + ADP + H(+). In terms of biological role, overexpression causes cell cycle arrest. The chain is Serine/threonine-protein kinase oca2 from Schizosaccharomyces pombe (strain 972 / ATCC 24843) (Fission yeast).